A 695-amino-acid chain; its full sequence is Transketolase (695 aa).

Position 37 (histidine 37) interacts with substrate. Thiamine diphosphate contacts are provided by residues histidine 77 and 126–128 (GPL). Mg(2+) is bound at residue aspartate 164. 2 residues coordinate thiamine diphosphate: glycine 165 and asparagine 194. Mg(2+) is bound by residues asparagine 194 and isoleucine 196. Positions 268, 361, and 388 each coordinate substrate. Thiamine diphosphate is bound at residue histidine 268. Catalysis depends on glutamate 415, which acts as the Proton donor. A thiamine diphosphate-binding site is contributed by phenylalanine 441. 3 residues coordinate substrate: histidine 465, aspartate 473, and arginine 524.

It belongs to the transketolase family. In terms of assembly, homodimer. Mg(2+) serves as cofactor. Ca(2+) is required as a cofactor. Requires Mn(2+) as cofactor. The cofactor is Co(2+). It depends on thiamine diphosphate as a cofactor.

The enzyme catalyses D-sedoheptulose 7-phosphate + D-glyceraldehyde 3-phosphate = aldehydo-D-ribose 5-phosphate + D-xylulose 5-phosphate. It participates in carbohydrate biosynthesis; Calvin cycle. Its function is as follows. Catalyzes the transfer of a two-carbon ketol group from a ketose donor to an aldose acceptor, via a covalent intermediate with the cofactor thiamine pyrophosphate. The chain is Transketolase (cbbT) from Sinorhizobium medicae (strain WSM419) (Ensifer medicae).